A 241-amino-acid polypeptide reads, in one-letter code: Uridylate kinase (241 aa).

15 to 18 (KMSG) is a binding site for ATP. Residue G57 participates in UMP binding. 2 residues coordinate ATP: G58 and R62. Residues D77 and 138 to 145 (TGNPFFTT) contribute to the UMP site. ATP-binding residues include T165, Y171, and D174.

It belongs to the UMP kinase family. Homohexamer.

The protein localises to the cytoplasm. It catalyses the reaction UMP + ATP = UDP + ADP. It functions in the pathway pyrimidine metabolism; CTP biosynthesis via de novo pathway; UDP from UMP (UMPK route): step 1/1. With respect to regulation, inhibited by UTP. Its function is as follows. Catalyzes the reversible phosphorylation of UMP to UDP. The polypeptide is Uridylate kinase (Dichelobacter nodosus (strain VCS1703A)).